Consider the following 245-residue polypeptide: tRNA (guanine-N(1)-)-methyltransferase (245 aa).

S-adenosyl-L-methionine-binding positions include Gly-114 and 134-139 (IGDYIL).

Belongs to the RNA methyltransferase TrmD family. Homodimer.

The protein resides in the cytoplasm. The catalysed reaction is guanosine(37) in tRNA + S-adenosyl-L-methionine = N(1)-methylguanosine(37) in tRNA + S-adenosyl-L-homocysteine + H(+). Its function is as follows. Specifically methylates guanosine-37 in various tRNAs. This Listeria welshimeri serovar 6b (strain ATCC 35897 / DSM 20650 / CCUG 15529 / CIP 8149 / NCTC 11857 / SLCC 5334 / V8) protein is tRNA (guanine-N(1)-)-methyltransferase.